The following is a 163-amino-acid chain: Thiol peroxidase (163 aa).

One can recognise a Thioredoxin domain in the interval 16–162 (LQVGDTAHDF…YDAAIAAVKS (147 aa)). Catalysis depends on Cys58, which acts as the Cysteine sulfenic acid (-SOH) intermediate. A disulfide bond links Cys58 and Cys92.

This sequence belongs to the peroxiredoxin family. Tpx subfamily. In terms of assembly, homodimer.

It catalyses the reaction a hydroperoxide + [thioredoxin]-dithiol = an alcohol + [thioredoxin]-disulfide + H2O. Its function is as follows. Thiol-specific peroxidase that catalyzes the reduction of hydrogen peroxide and organic hydroperoxides to water and alcohols, respectively. Plays a role in cell protection against oxidative stress by detoxifying peroxides. This chain is Thiol peroxidase, found in Streptococcus sanguinis.